Reading from the N-terminus, the 527-residue chain is Bifunctional dihydrofolate reductase-thymidylate synthase (527 aa).

The DHFR domain occupies 28–238 (PFSVVVASDE…KKYQFEKLVP (211 aa)). Val-32 lines the substrate pocket. NADP(+) contacts are provided by residues Ala-34 and 40–46 (GIGDGGT). Asp-54 is a binding site for substrate. Residues 84–86 (RKT) and 105–108 (LSRS) each bind NADP(+). Substrate-binding residues include Ile-160, Tyr-166, and Thr-184. 161-168 (GGGTIYKQ) contributes to the NADP(+) binding site. Residues 243–527 (EEQYLNLVGR…YPVISMEMAV (285 aa)) form a thymidylate synthase region. Arg-263 is a dUMP binding site. Cys-409 is an active-site residue. DUMP-binding positions include His-410, 428 to 432 (QRSCD), Asn-440, and 470 to 472 (HVY).

In the N-terminal section; belongs to the dihydrofolate reductase family. It in the C-terminal section; belongs to the thymidylate synthase family. Homodimer.

It carries out the reaction dUMP + (6R)-5,10-methylene-5,6,7,8-tetrahydrofolate = 7,8-dihydrofolate + dTMP. The catalysed reaction is (6S)-5,6,7,8-tetrahydrofolate + NADP(+) = 7,8-dihydrofolate + NADPH + H(+). The protein operates within pyrimidine metabolism; dTTP biosynthesis. It functions in the pathway cofactor biosynthesis; tetrahydrofolate biosynthesis; 5,6,7,8-tetrahydrofolate from 7,8-dihydrofolate: step 1/1. Bifunctional enzyme. Involved in de novo dTMP biosynthesis. Key enzyme in folate metabolism. Catalyzes an essential reaction for de novo glycine and purine synthesis, DNA precursor synthesis, and for the conversion of dUMP to dTMP. This chain is Bifunctional dihydrofolate reductase-thymidylate synthase, found in Trypanosoma brucei brucei.